An 847-amino-acid polypeptide reads, in one-letter code: B-cell receptor CD22 (847 aa).

Residues 1-19 (MHLLGPWLLLLVLEYLAFS) form the signal peptide. In terms of domain architecture, Ig-like V-type spans 20 to 138 (DSSKWAFEHP…MERIHLNVSE (119 aa)). Residues 20–687 (DSSKWAFEHP…YYSPETIGRR (668 aa)) lie on the Extracellular side of the membrane. N-linked (GlcNAc...) asparagine glycosylation is found at asparagine 67, asparagine 101, and asparagine 112. Arginine 120 contributes to the N-acetylneuraminate binding site. N-linked (GlcNAc...) asparagine glycosylation is found at asparagine 135, asparagine 164, and asparagine 231. 6 consecutive Ig-like C2-type domains span residues 143 to 235 (PHIQ…DTVQ), 242 to 326 (PKLE…VFLQ), 331 to 416 (PEPS…LDVQ), 419 to 500 (PKKV…VALN), 505 to 582 (PRDV…QTAS), and 593 to 676 (PRRL…STLT). Residues cysteine 161 and cysteine 219 are joined by a disulfide bond. 2 disulfides stabilise this stretch: cysteine 265–cysteine 309 and cysteine 353–cysteine 396. Residues asparagine 363, asparagine 428, asparagine 445, asparagine 448, and asparagine 479 are each glycosylated (N-linked (GlcNAc...) asparagine). Cystine bridges form between cysteine 442–cysteine 484 and cysteine 529–cysteine 571. Residues asparagine 574 and asparagine 634 are each glycosylated (N-linked (GlcNAc...) asparagine). A disulfide bridge links cysteine 616 with cysteine 659. Residues 688 to 708 (VAVGFGSCLAILILAICGLKL) traverse the membrane as a helical segment. Over 709–847 (QRRWKRTQSQ…ENVDYVILKH (139 aa)) the chain is Cytoplasmic. Residues serine 725, serine 726, and serine 729 each carry the phosphoserine modification. 2 consecutive short sequence motifs (ITIM motif) follow at residues 760-765 (ISYTTL) and 794-799 (VTYSVL). A Phosphotyrosine modification is found at tyrosine 762. Tyrosine 807, tyrosine 822, and tyrosine 842 each carry phosphotyrosine. 2 consecutive short sequence motifs (ITIM motif) follow at residues 820–825 (IHYSEL) and 840–845 (VDYVIL).

The protein belongs to the immunoglobulin superfamily. SIGLEC (sialic acid binding Ig-like lectin) family. In terms of assembly, predominantly monomer of isoform CD22-beta. Also found as heterodimer of isoform CD22-beta and a shorter isoform. Interacts with PTPN6/SHP-1, LYN, SYK, PIK3R1/PIK3R2 and PLCG1 upon phosphorylation. Interacts with GRB2, INPP5D and SHC1 upon phosphorylation. May form a complex with INPP5D/SHIP, GRB2 and SHC1. Phosphorylation of Tyr-762, Tyr-807 and Tyr-822 are involved in binding to SYK, GRB2 and SYK, respectively. Phosphorylation of Tyr-842 is involved in binding to SYK, PLCG2 and PIK3R1/PIK3R2. Post-translationally, phosphorylated on tyrosine residues by LYN.

It localises to the cell membrane. Functionally, most highly expressed siglec (sialic acid-binding immunoglobulin-like lectin) on B-cells that plays a role in various aspects of B-cell biology including differentiation, antigen presentation, and trafficking to bone marrow. Binds to alpha 2,6-linked sialic acid residues of surface molecules such as CD22 itself, CD45 and IgM in a cis configuration. Can also bind to ligands on other cells as an adhesion molecule in a trans configuration. Acts as an inhibitory coreceptor on the surface of B-cells and inhibits B-cell receptor induced signaling, characterized by inhibition of the calcium mobilization and cellular activation. Mechanistically, the immunoreceptor tyrosine-based inhibitory motif domain is phosphorylated by the Src kinase LYN, which in turn leads to the recruitment of the protein tyrosine phosphatase 1/PTPN6, leading to the negative regulation of BCR signaling. If this negative signaling from is of sufficient strength, apoptosis of the B-cell can be induced. The sequence is that of B-cell receptor CD22 from Pan paniscus (Pygmy chimpanzee).